A 260-amino-acid chain; its full sequence is UPF0246 protein BamMC406_2140 (260 aa).

Belongs to the UPF0246 family.

This chain is UPF0246 protein BamMC406_2140, found in Burkholderia ambifaria (strain MC40-6).